A 312-amino-acid polypeptide reads, in one-letter code: MDSDMSGGMVKVMVPASTANLGPGFDVLGVALNLYTEISMEFIKDGLEIFVEGEGVEDIENDQNNLIYKSAEVIFKKIGVFNKGLRIKIKNEIPLGRGLGSSAAAIVGGLLAANELTGRVLKREEILNLAALIEGHADNVTAALNGGLNVSIFDKNKVYYARKALEDDIDFLAFVPQEMVRTEIARKVLPEKVDFNDAVFNTGRTAFLVSVLIEKKYELLKIATQDMLHQKYRAKLVPFMEECFEKALLAGAYAAFLSGAGPTIMAISSPENSERVLKEVGKVYEERGLSYRAYRLKCENNGAQVLKTPSFV.

94 to 104 (PLGRGLGSSAA) provides a ligand contact to ATP.

Belongs to the GHMP kinase family. Homoserine kinase subfamily.

The protein localises to the cytoplasm. It catalyses the reaction L-homoserine + ATP = O-phospho-L-homoserine + ADP + H(+). Its pathway is amino-acid biosynthesis; L-threonine biosynthesis; L-threonine from L-aspartate: step 4/5. Functionally, catalyzes the ATP-dependent phosphorylation of L-homoserine to L-homoserine phosphate. This Caldanaerobacter subterraneus subsp. tengcongensis (strain DSM 15242 / JCM 11007 / NBRC 100824 / MB4) (Thermoanaerobacter tengcongensis) protein is Homoserine kinase.